The sequence spans 198 residues: IMP cyclohydrolase (198 aa).

The protein belongs to the archaeal IMP cyclohydrolase family.

It catalyses the reaction IMP + H2O = 5-formamido-1-(5-phospho-D-ribosyl)imidazole-4-carboxamide. It participates in purine metabolism; IMP biosynthesis via de novo pathway; IMP from 5-formamido-1-(5-phospho-D-ribosyl)imidazole-4-carboxamide: step 1/1. Functionally, catalyzes the cyclization of 5-formylamidoimidazole-4-carboxamide ribonucleotide to IMP. The sequence is that of IMP cyclohydrolase from Thermococcus kodakarensis (strain ATCC BAA-918 / JCM 12380 / KOD1) (Pyrococcus kodakaraensis (strain KOD1)).